Reading from the N-terminus, the 760-residue chain is Catecholate siderophore receptor Fiu (760 aa).

The signal sequence occupies residues 1-31; it reads MENNRNFPARQFHSLTFFAGLCIGITPVAQA. Positions 67 to 175 constitute a TBDR plug domain; sequence PVADTTRTMT…PTGSINMISK (109 aa). A TBDR beta-barrel domain is found at 180 to 760; the sequence is DSGIDASASI…TFLLTANMHF (581 aa). A TonB C-terminal box motif is present at residues 743–760; sequence RYHPGEPRTFLLTANMHF.

Belongs to the TonB-dependent receptor family.

It localises to the cell outer membrane. Its function is as follows. Involved in the active transport across the outer membrane of iron complexed with catecholate siderophores such as dihydroxybenzoylserine and dihydroxybenzoate. It derives its energy for transport by interacting with the trans-periplasmic membrane protein TonB. Can also transport catechol-substituted cephalosporins. Receptor for microcins M, H47 and E492. The polypeptide is Catecholate siderophore receptor Fiu (fiu) (Escherichia coli O157:H7).